The sequence spans 1035 residues: Calcium-transporting ATPase 7, plasma membrane-type (1035 aa).

The Cytoplasmic portion of the chain corresponds to Met-1–Ala-166. Residues Leu-167–Ile-187 form a helical membrane-spanning segment. Topologically, residues Lys-188–Asp-194 are extracellular. A helical transmembrane segment spans residues Gly-195 to Val-215. Topologically, residues Ser-216–Glu-348 are cytoplasmic. The helical transmembrane segment at Gly-349–Leu-369 threads the bilayer. The Extracellular portion of the chain corresponds to Thr-370 to Asn-395. N-linked (GlcNAc...) asparagine glycosylation occurs at Asn-391. A helical membrane pass occupies residues Ala-396–Ile-416. The Cytoplasmic portion of the chain corresponds to Pro-417–Lys-818. The active-site 4-aspartylphosphate intermediate is the Asp-460. Residues Asp-761 and Asp-765 each contribute to the Mg(2+) site. Residues Phe-819–Val-839 traverse the membrane as a helical segment. Residues Thr-840–Pro-845 are Extracellular-facing. The chain crosses the membrane as a helical span at residues Leu-846–Leu-866. Topologically, residues Ala-867 to Leu-887 are cytoplasmic. The chain crosses the membrane as a helical span at residues Ile-888–Leu-910. The Extracellular portion of the chain corresponds to Gln-911–Gly-919. Residues Ala-920–Asn-940 traverse the membrane as a helical segment. The Cytoplasmic segment spans residues Glu-941–Arg-960. A helical transmembrane segment spans residues Met-961 to Thr-981. Residues Lys-982 to Gly-990 lie on the Extracellular side of the membrane. The chain crosses the membrane as a helical span at residues Trp-991–Val-1011. At Lys-1012–Thr-1035 the chain is on the cytoplasmic side.

Belongs to the cation transport ATPase (P-type) (TC 3.A.3) family. Type IIB subfamily.

Its subcellular location is the golgi apparatus membrane. The enzyme catalyses Ca(2+)(in) + ATP + H2O = Ca(2+)(out) + ADP + phosphate + H(+). Activated by calmodulin. Its function is as follows. This magnesium-dependent enzyme catalyzes the hydrolysis of ATP coupled with the translocation of calcium from the cytosol out of the cell, into the endoplasmic reticulum, or into organelles. Involved in salt stress tolerance. The sequence is that of Calcium-transporting ATPase 7, plasma membrane-type from Oryza sativa subsp. japonica (Rice).